Consider the following 135-residue polypeptide: MRNTFIVCWQYLRAFALIYLCLLAGNAVSALLPFTIPGSIIGMLVLFTLLASQILPAQWVKPGCHLLIRHMALLFVPIGVGVMNYYDLVSQQFGPIVVSCLISTFIVMLVVGFSTQIMQRERAMAGDRTPPKDNE.

The next 4 helical transmembrane spans lie at 5–25 (FIVC…LLAG), 30–50 (ALLP…FTLL), 63–83 (GCHL…VGVM), and 93–113 (FGPI…VVGF).

It belongs to the UPF0299 family.

It is found in the cell inner membrane. The sequence is that of UPF0299 membrane protein PC1_1498 from Pectobacterium carotovorum subsp. carotovorum (strain PC1).